A 119-amino-acid chain; its full sequence is Methylglyoxal synthase (119 aa).

An MGS-like domain is found at 1 to 119; it reads MKIALIAHDK…KTAELIIKQF (119 aa). Residues His-8, Lys-12, 34-37, and 54-55 contribute to the substrate site; these read TGTT and SG. The active-site Proton donor/acceptor is the Asp-60. His-87 is a substrate binding site.

The protein belongs to the methylglyoxal synthase family.

The catalysed reaction is dihydroxyacetone phosphate = methylglyoxal + phosphate. Its function is as follows. Catalyzes the formation of methylglyoxal from dihydroxyacetone phosphate. This is Methylglyoxal synthase from Clostridium beijerinckii (strain ATCC 51743 / NCIMB 8052) (Clostridium acetobutylicum).